The chain runs to 491 residues: Glutamate--tRNA ligase (491 aa).

A 'HIGH' region motif is present at residues 10-20 (PSPTGYLHIGG). The 'KMSKS' region signature appears at 243 to 247 (KISKR). Lys-246 contacts ATP.

It belongs to the class-I aminoacyl-tRNA synthetase family. Glutamate--tRNA ligase type 1 subfamily. As to quaternary structure, monomer.

Its subcellular location is the cytoplasm. It catalyses the reaction tRNA(Glu) + L-glutamate + ATP = L-glutamyl-tRNA(Glu) + AMP + diphosphate. Catalyzes the attachment of glutamate to tRNA(Glu) in a two-step reaction: glutamate is first activated by ATP to form Glu-AMP and then transferred to the acceptor end of tRNA(Glu). In Desulfotalea psychrophila (strain LSv54 / DSM 12343), this protein is Glutamate--tRNA ligase.